A 494-amino-acid chain; its full sequence is Alpha-amylase-related protein (494 aa).

Positions 1-20 (MIKFALALTLCLAGASLSLA) are cleaved as a signal peptide. Glutamine 21 carries the post-translational modification Pyrrolidone carboxylic acid. Cysteine 48 and cysteine 104 form a disulfide bridge. Residues asparagine 118, glutamine 169, and aspartate 178 each contribute to the Ca(2+) site. Cysteine 157 and cysteine 171 are oxidised to a cystine. Arginine 206 is a chloride binding site. Residue aspartate 208 is the Nucleophile of the active site. A Ca(2+)-binding site is contributed by histidine 212. Residue glutamate 245 is the Proton donor of the active site. Asparagine 308 and arginine 343 together coordinate chloride. Intrachain disulfides connect cysteine 376–cysteine 382, cysteine 418–cysteine 441, and cysteine 448–cysteine 460.

Belongs to the glycosyl hydrolase 13 family. As to quaternary structure, monomer. Ca(2+) serves as cofactor. Requires chloride as cofactor.

Its subcellular location is the secreted. The enzyme catalyses Endohydrolysis of (1-&gt;4)-alpha-D-glucosidic linkages in polysaccharides containing three or more (1-&gt;4)-alpha-linked D-glucose units.. This Drosophila bocqueti (Fruit fly) protein is Alpha-amylase-related protein (Amyrel).